We begin with the raw amino-acid sequence, 114 residues long: Large ribosomal subunit protein bL20c (114 aa).

The protein belongs to the bacterial ribosomal protein bL20 family.

The protein localises to the plastid. The protein resides in the chloroplast. Binds directly to 23S ribosomal RNA and is necessary for the in vitro assembly process of the 50S ribosomal subunit. It is not involved in the protein synthesizing functions of that subunit. This Psilotum nudum (Whisk fern) protein is Large ribosomal subunit protein bL20c.